We begin with the raw amino-acid sequence, 1305 residues long: Contactin-associated protein-like 5 (1305 aa).

Residues 1-22 form the signal peptide; that stretch reads MDSPALGAVALLLAGFWHLGLT. The F5/8 type C domain maps to 23 to 174; that stretch reads ATNYNCDGAL…IGLRVEVFGC (152 aa). The Extracellular segment spans residues 23–1236; it reads ATNYNCDGAL…PLTNAVRSDS (1214 aa). 2 Laminin G-like domains span residues 180–360 and 367–544; these read IADF…TFSC and PITF…IDLC. 5 disulfide bridges follow: Cys329–Cys360, Cys512–Cys544, Cys550–Cys561, Cys555–Cys570, and Cys572–Cys582. Positions 546–583 constitute an EGF-like 1 domain; that stretch reads IKDRCLPNYCEHGGKCSQSWTTFYCDCNDTSYMGATCH. Residues 584–790 enclose the Fibrinogen C-terminal domain; sequence NSIYEQSCEA…LHCYGDRQFW (207 aa). The 166-residue stretch at 791-956 folds into the Laminin G-like 3 domain; sequence NAASFNTEAS…KMTPGVKPGC (166 aa). Disulfide bonds link Cys929–Cys956, Cys960–Cys973, Cys967–Cys982, Cys984–Cys994, and Cys1163–Cys1198. Residues 957–995 enclose the EGF-like 2 domain; the sequence is PGHCSSYGNLCHNGGKCVEKYNGYSCDCTSSAYEGPFCK. One can recognise a Laminin G-like 4 domain in the interval 1017-1198; it reads PVTKNASTSS…VKGSLTESSC (182 aa). A helical membrane pass occupies residues 1237-1257; it reads AVIGGVIAVVIFIIFCIIAIM. At 1258-1305 the chain is on the cytoplasmic side; the sequence is SRFLYQHKQAHRSSQTKEKEYPENLESSFKADIDLQNTVSECKREYFI.

It belongs to the neurexin family. In terms of tissue distribution, expressed in brain.

It is found in the membrane. May play a role in the correct development and proper functioning of the peripheral and central nervous system and be involved in cell adhesion and intercellular communication. The protein is Contactin-associated protein-like 5 (CNTNAP5) of Gallus gallus (Chicken).